We begin with the raw amino-acid sequence, 102 residues long: Protein C4 (102 aa).

Residues 1–27 are compositionally biased toward low complexity; it reads MRMGSLISTCLSSSKASSSARINDSST. Disordered stretches follow at residues 1-35 and 47-86; these read MRMGSLISTCLSSSKASSSARINDSSTWSPPPGQH and RQTSSPIWRRTETPSNGESFRSMDDLQEGDNNQPMTLTPR.

This sequence belongs to the geminiviridae protein AC4/C4 family.

Its function is as follows. Pathogenicity determinant. May act as a suppressor of RNA-mediated gene silencing, also known as post-transcriptional gene silencing (PTGS), a mechanism of plant viral defense that limits the accumulation of viral RNAs. The protein is Protein C4 of Cynanchum acutum (Little mallow).